We begin with the raw amino-acid sequence, 1217 residues long: WD repeat-containing protein on Y chromosome (1217 aa).

WD repeat units follow at residues 155–199, 323–362, 366–405, 456–495, 508–547, 595–635, 740–779, and 823–862; these read EDMT…LRSA, RIPL…EPSA, GHNG…LLQT, THAA…RKII, TIDI…VVRN, FHTD…RRYN, KVGD…IPEA, and GHLK…LGTL. 2 disordered regions span residues 910–929 and 1033–1217; these read QVKR…VEDT and AGGQ…KDKP. Over residues 919–929 the composition is skewed to acidic residues; it reads EREDEGEVEDT. Composition is skewed to polar residues over residues 1041 to 1054, 1085 to 1107, and 1137 to 1179; these read RASS…TNSI, FGPN…SQLK, and PVST…TSAN. Low complexity predominate over residues 1181–1190; that stretch reads KPDIMPVKIK. Residues 1198–1210 are compositionally biased toward polar residues; it reads RNTAPVQITTSIA.

In Drosophila mojavensis (Fruit fly), this protein is WD repeat-containing protein on Y chromosome.